Consider the following 329-residue polypeptide: 2-oxoglutarate-dependent dioxygenase htyE (329 aa).

The region spanning 175-289 (NTSELRLLHY…RYSVAYFGKP (115 aa)) is the Fe2OG dioxygenase domain. Fe cation contacts are provided by His201, Asp203, and His261. Arg280 is a binding site for 2-oxoglutarate.

Belongs to the iron/ascorbate-dependent oxidoreductase family. It depends on Fe(2+) as a cofactor.

It participates in antifungal biosynthesis. Functionally, 2-oxoglutarate-dependent dioxygenase; part of the gene cluster that mediates the de novo generation of L-homotyrosine from acetyl-CoA and 4-hydroxyphenyl-pyruvate. L-homotyrosine is a building block of echinocandin B, a fungal lipidated cyclic hexapeptide that acts as an antifungal agent. L-homotyrosine 4-hydroxyphenyl-pyruvate first undergoes an aldol-type condensation by htyA with the C-2 of acetyl-CoA followed by the release of CoA to form 2-(4-hydroxybenzyl)-malate. This is followed by isomerization of 2-(4-hydroxy-benzyl)-malate to 3-(4-hydroxybenzyl)-malate by htyD. Thereafter, 3-(4-hydroxybenzyl)-malate undergoes decarboxylation and oxidation to form 2-oxo-4-(4-hydroxybenzyl)butanoic acid, coupled to reduction of NAD(+) to NADH by htyC. The product then undergoes transamination catalyzed by htyB to form L-homotyrosine. In Aspergillus rugulosus (Emericella rugulosa), this protein is 2-oxoglutarate-dependent dioxygenase htyE.